Reading from the N-terminus, the 352-residue chain is Holliday junction branch migration complex subunit RuvB (352 aa).

Residues 4 to 191 (TDKLAAPARV…FGIVARLEFY (188 aa)) are large ATPase domain (RuvB-L). ATP is bound by residues L30, R31, G72, K75, T76, T77, 138–140 (EDY), R181, Y191, and R228. T76 is a Mg(2+) binding site. A small ATPAse domain (RuvB-S) region spans residues 192–262 (TADELARIVT…MADAALAMLD (71 aa)). Residues 265-352 (SVGFDLMDRK…SGASELFGDA (88 aa)) form a head domain (RuvB-H) region. DNA is bound by residues R301, R320, and R325.

It belongs to the RuvB family. In terms of assembly, homohexamer. Forms an RuvA(8)-RuvB(12)-Holliday junction (HJ) complex. HJ DNA is sandwiched between 2 RuvA tetramers; dsDNA enters through RuvA and exits via RuvB. An RuvB hexamer assembles on each DNA strand where it exits the tetramer. Each RuvB hexamer is contacted by two RuvA subunits (via domain III) on 2 adjacent RuvB subunits; this complex drives branch migration. In the full resolvosome a probable DNA-RuvA(4)-RuvB(12)-RuvC(2) complex forms which resolves the HJ.

It localises to the cytoplasm. The catalysed reaction is ATP + H2O = ADP + phosphate + H(+). In terms of biological role, the RuvA-RuvB-RuvC complex processes Holliday junction (HJ) DNA during genetic recombination and DNA repair, while the RuvA-RuvB complex plays an important role in the rescue of blocked DNA replication forks via replication fork reversal (RFR). RuvA specifically binds to HJ cruciform DNA, conferring on it an open structure. The RuvB hexamer acts as an ATP-dependent pump, pulling dsDNA into and through the RuvAB complex. RuvB forms 2 homohexamers on either side of HJ DNA bound by 1 or 2 RuvA tetramers; 4 subunits per hexamer contact DNA at a time. Coordinated motions by a converter formed by DNA-disengaged RuvB subunits stimulates ATP hydrolysis and nucleotide exchange. Immobilization of the converter enables RuvB to convert the ATP-contained energy into a lever motion, pulling 2 nucleotides of DNA out of the RuvA tetramer per ATP hydrolyzed, thus driving DNA branch migration. The RuvB motors rotate together with the DNA substrate, which together with the progressing nucleotide cycle form the mechanistic basis for DNA recombination by continuous HJ branch migration. Branch migration allows RuvC to scan DNA until it finds its consensus sequence, where it cleaves and resolves cruciform DNA. The protein is Holliday junction branch migration complex subunit RuvB of Cupriavidus necator (strain ATCC 17699 / DSM 428 / KCTC 22496 / NCIMB 10442 / H16 / Stanier 337) (Ralstonia eutropha).